The sequence spans 450 residues: Benzene 1,2-dioxygenase subunit alpha (450 aa).

One can recognise a Rieske domain in the interval 56-163 (LLGHETHIRK…VETYKGLIFA (108 aa)). [2Fe-2S] cluster is bound by residues cysteine 96, histidine 98, cysteine 116, and histidine 119. Fe cation-binding residues include histidine 222 and histidine 228.

The protein belongs to the bacterial ring-hydroxylating dioxygenase alpha subunit family. This dioxygenase system consists of four proteins: the two subunits of the hydroxylase component (BedC1 and BedC2), a ferredoxin (BedB) and a ferredoxin reductase (BedA). [2Fe-2S] cluster serves as cofactor. It depends on Fe cation as a cofactor.

It carries out the reaction benzene + NADH + O2 + H(+) = cis-1,2-dihydrobenzene-1,2-diol + NAD(+). The protein operates within aromatic compound metabolism; benzene degradation; catechol from benzene: step 1/2. The polypeptide is Benzene 1,2-dioxygenase subunit alpha (bedC1) (Pseudomonas putida (Arthrobacter siderocapsulatus)).